The chain runs to 158 residues: Developmental pluripotency-associated protein 3 (158 aa).

Disordered regions lie at residues 1 to 38 and 54 to 78; these read MDEP…EILQ and SAKP…VENR. Residues 26-35 are compositionally biased toward acidic residues; it reads DEGDSPDDSE. A compositionally biased stretch (basic residues) spans 58 to 68; the sequence is TKYHRRQRVRL.

The protein resides in the nucleus. Its subcellular location is the cytoplasm. Its function is as follows. Primordial germ cell (PGCs)-specific protein involved in epigenetic chromatin reprogramming in the zygote following fertilization. In zygotes, DNA demethylation occurs selectively in the paternal pronucleus before the first cell division, while the adjacent maternal pronucleus and certain paternally-imprinted loci are protected from this process. Participates in protection of DNA methylation in the maternal pronucleus by preventing conversion of 5mC to 5hmC: specifically recognizes and binds histone H3 dimethylated at 'Lys-9' (H3K9me2) on maternal genome, and protects maternal genome from TET3-mediated conversion to 5hmC and subsequent DNA demethylation. Does not bind paternal chromatin, which is mainly packed into protamine and does not contain much H3K9me2 mark. Also protects imprinted loci that are marked with H3K9me2 in mature sperm from DNA demethylation in early embryogenesis. May be important for the totipotent/pluripotent states continuing through preimplantation development. Also involved in chromatin condensation in oocytogenesis. The sequence is that of Developmental pluripotency-associated protein 3 (Dppa3) from Rattus norvegicus (Rat).